A 514-amino-acid chain; its full sequence is 2,3-bisphosphoglycerate-independent phosphoglycerate mutase (514 aa).

The Mn(2+) site is built by Asp-15 and Ser-65. Ser-65 (phosphoserine intermediate) is an active-site residue. Residues His-126, 156–157, Arg-188, Arg-194, 261–264, and Lys-335 contribute to the substrate site; these read RD and RADR. The Mn(2+) site is built by Asp-403, His-407, Asp-444, His-445, and His-462.

It belongs to the BPG-independent phosphoglycerate mutase family. In terms of assembly, monomer. Mn(2+) is required as a cofactor.

The catalysed reaction is (2R)-2-phosphoglycerate = (2R)-3-phosphoglycerate. Its pathway is carbohydrate degradation; glycolysis; pyruvate from D-glyceraldehyde 3-phosphate: step 3/5. Functionally, catalyzes the interconversion of 2-phosphoglycerate and 3-phosphoglycerate. This is 2,3-bisphosphoglycerate-independent phosphoglycerate mutase from Syntrophotalea carbinolica (strain DSM 2380 / NBRC 103641 / GraBd1) (Pelobacter carbinolicus).